The chain runs to 1391 residues: ESX-5 secretion system protein EccC5 (1391 aa).

Transmembrane regions (helical) follow at residues 38–58 (WLIV…AMVF) and 65–85 (FGGI…MMMF). FtsK domains lie at 476–678 (GELL…GAAQ), 858–1052 (QPPW…EDAK), and 1161–1354 (LAPV…DPDE). Residues 499–506 (GTTGSGKS), 876–883 (GAGGSGKT), and 1178–1185 (GRRECGRT) each bind ATP.

As to quaternary structure, part of the ESX-5 / type VII secretion system (T7SS), which is composed of cytosolic and membrane components. The ESX-5 membrane complex is composed of EccB5, EccC5, EccD5 and EccE5.

Its subcellular location is the cell inner membrane. Functionally, part of the ESX-5 specialized secretion system, which is responsible for the secretion of EsxN and a number of PE_PGRS and PPE proteins, including PPE41. In Mycobacterium tuberculosis (strain CDC 1551 / Oshkosh), this protein is ESX-5 secretion system protein EccC5.